Reading from the N-terminus, the 72-residue chain is Translation initiation factor IF-1 (72 aa).

The S1-like domain maps to M1 to K72.

The protein belongs to the IF-1 family. In terms of assembly, component of the 30S ribosomal translation pre-initiation complex which assembles on the 30S ribosome in the order IF-2 and IF-3, IF-1 and N-formylmethionyl-tRNA(fMet); mRNA recruitment can occur at any time during PIC assembly.

It is found in the cytoplasm. Functionally, one of the essential components for the initiation of protein synthesis. Stabilizes the binding of IF-2 and IF-3 on the 30S subunit to which N-formylmethionyl-tRNA(fMet) subsequently binds. Helps modulate mRNA selection, yielding the 30S pre-initiation complex (PIC). Upon addition of the 50S ribosomal subunit IF-1, IF-2 and IF-3 are released leaving the mature 70S translation initiation complex. This chain is Translation initiation factor IF-1, found in Bifidobacterium adolescentis (strain ATCC 15703 / DSM 20083 / NCTC 11814 / E194a).